The sequence spans 477 residues: Ribosomal RNA small subunit methyltransferase F (477 aa).

S-adenosyl-L-methionine-binding positions include 125-131 (AAAPGSK), Glu149, Asp176, and Asp194. The active-site Nucleophile is Cys247.

This sequence belongs to the class I-like SAM-binding methyltransferase superfamily. RsmB/NOP family.

Its subcellular location is the cytoplasm. The catalysed reaction is cytidine(1407) in 16S rRNA + S-adenosyl-L-methionine = 5-methylcytidine(1407) in 16S rRNA + S-adenosyl-L-homocysteine + H(+). Specifically methylates the cytosine at position 1407 (m5C1407) of 16S rRNA. This chain is Ribosomal RNA small subunit methyltransferase F, found in Klebsiella pneumoniae (strain 342).